The chain runs to 430 residues: Phosphomethylpyrimidine synthase (430 aa).

Residues Asn68, Met96, Tyr125, His164, 186–188 (SRG), 227–230 (DALR), and Glu266 each bind substrate. His270 provides a ligand contact to Zn(2+). Substrate is bound at residue Tyr293. Residue His334 coordinates Zn(2+). [4Fe-4S] cluster contacts are provided by Cys410, Cys413, and Cys417.

The protein belongs to the ThiC family. The cofactor is [4Fe-4S] cluster.

It carries out the reaction 5-amino-1-(5-phospho-beta-D-ribosyl)imidazole + S-adenosyl-L-methionine = 4-amino-2-methyl-5-(phosphooxymethyl)pyrimidine + CO + 5'-deoxyadenosine + formate + L-methionine + 3 H(+). Its pathway is cofactor biosynthesis; thiamine diphosphate biosynthesis. Functionally, catalyzes the synthesis of the hydroxymethylpyrimidine phosphate (HMP-P) moiety of thiamine from aminoimidazole ribotide (AIR) in a radical S-adenosyl-L-methionine (SAM)-dependent reaction. The protein is Phosphomethylpyrimidine synthase of Pyrobaculum aerophilum (strain ATCC 51768 / DSM 7523 / JCM 9630 / CIP 104966 / NBRC 100827 / IM2).